We begin with the raw amino-acid sequence, 456 residues long: Adenylosuccinate synthetase isozyme 2 (456 aa).

Residues 1–24 form a disordered region; it reads MAFAETNPAASSLPNGDCGRPRAR. Residues 39–45 and 67–69 contribute to the GTP site; these read GDEGKGK and GHT. The Proton acceptor role is filled by aspartate 40. 2 residues coordinate Mg(2+): aspartate 40 and glycine 67. Position 40 (aspartate 40) interacts with substrate. IMP is bound by residues 40-43, 65-68, threonine 162, arginine 176, asparagine 255, threonine 270, and arginine 334; these read DEGK and NAGH. Histidine 68 serves as the catalytic Proton donor. 330 to 336 is a binding site for substrate; it reads VTTGRKR. Residues arginine 336, 362-364, and 444-447 contribute to the GTP site; these read KLD and GVGK.

Belongs to the adenylosuccinate synthetase family. Homodimer. Mg(2+) is required as a cofactor. In terms of tissue distribution, widely expressed.

Its subcellular location is the cytoplasm. It localises to the mitochondrion. The enzyme catalyses IMP + L-aspartate + GTP = N(6)-(1,2-dicarboxyethyl)-AMP + GDP + phosphate + 2 H(+). Its pathway is purine metabolism; AMP biosynthesis via de novo pathway; AMP from IMP: step 1/2. With respect to regulation, inhibited competitively by AMP and IMP and non-competitively by fructose 1,6-bisphosphate. Its function is as follows. Plays an important role in the de novo pathway and in the salvage pathway of purine nucleotide biosynthesis. Catalyzes the first committed step in the biosynthesis of AMP from IMP. This chain is Adenylosuccinate synthetase isozyme 2, found in Sus scrofa (Pig).